We begin with the raw amino-acid sequence, 320 residues long: Putative fatty acid elongase 3 (320 aa).

N-linked (GlcNAc...) asparagine glycosylation occurs at asparagine 14. Helical transmembrane passes span 33 to 53 (WMQNHWYQSITASVVYVAVIF), 67 to 87 (LDTPLFVWNSFLAIFSILGFL), 120 to 140 (FWTEQFAMSKLFELIDTIFIV), 145 to 165 (PLIFLHWYHHVTVMIYTWHAY), 203 to 223 (MAMVVTTLQLAQMVMGVIIGV), and 242 to 262 (LGLCFGVYFTYFLLFANFFYH).

Belongs to the ELO family.

The protein localises to the membrane. It catalyses the reaction a very-long-chain acyl-CoA + malonyl-CoA + H(+) = a very-long-chain 3-oxoacyl-CoA + CO2 + CoA. Its pathway is lipid metabolism; fatty acid biosynthesis. Its function is as follows. Could be implicated in synthesis of very long chain fatty acids. May be required for normally rapid growth. The polypeptide is Putative fatty acid elongase 3 (elo-3) (Caenorhabditis elegans).